The sequence spans 198 residues: dITP/XTP pyrophosphatase (198 aa).

9–14 lines the substrate pocket; sequence SNNAKK. 2 residues coordinate Mg(2+): Asp41 and Asp70. Asp70 acts as the Proton acceptor in catalysis. Substrate is bound by residues Ser71, 153–156, Lys176, and 181–182; these read FGYD and HR.

Belongs to the HAM1 NTPase family. In terms of assembly, homodimer. The cofactor is Mg(2+).

The enzyme catalyses XTP + H2O = XMP + diphosphate + H(+). It carries out the reaction dITP + H2O = dIMP + diphosphate + H(+). The catalysed reaction is ITP + H2O = IMP + diphosphate + H(+). Functionally, pyrophosphatase that catalyzes the hydrolysis of nucleoside triphosphates to their monophosphate derivatives, with a high preference for the non-canonical purine nucleotides XTP (xanthosine triphosphate), dITP (deoxyinosine triphosphate) and ITP. Seems to function as a house-cleaning enzyme that removes non-canonical purine nucleotides from the nucleotide pool, thus preventing their incorporation into DNA/RNA and avoiding chromosomal lesions. This chain is dITP/XTP pyrophosphatase, found in Aromatoleum aromaticum (strain DSM 19018 / LMG 30748 / EbN1) (Azoarcus sp. (strain EbN1)).